The following is a 59-amino-acid chain: Large ribosomal subunit protein uL30 (59 aa).

This sequence belongs to the universal ribosomal protein uL30 family. Part of the 50S ribosomal subunit.

In Rhodococcus erythropolis (strain PR4 / NBRC 100887), this protein is Large ribosomal subunit protein uL30.